We begin with the raw amino-acid sequence, 253 residues long: Imidazole glycerol phosphate synthase subunit HisF (253 aa).

Catalysis depends on residues aspartate 11 and aspartate 130.

This sequence belongs to the HisA/HisF family. In terms of assembly, heterodimer of HisH and HisF.

Its subcellular location is the cytoplasm. The enzyme catalyses 5-[(5-phospho-1-deoxy-D-ribulos-1-ylimino)methylamino]-1-(5-phospho-beta-D-ribosyl)imidazole-4-carboxamide + L-glutamine = D-erythro-1-(imidazol-4-yl)glycerol 3-phosphate + 5-amino-1-(5-phospho-beta-D-ribosyl)imidazole-4-carboxamide + L-glutamate + H(+). The protein operates within amino-acid biosynthesis; L-histidine biosynthesis; L-histidine from 5-phospho-alpha-D-ribose 1-diphosphate: step 5/9. Its function is as follows. IGPS catalyzes the conversion of PRFAR and glutamine to IGP, AICAR and glutamate. The HisF subunit catalyzes the cyclization activity that produces IGP and AICAR from PRFAR using the ammonia provided by the HisH subunit. The polypeptide is Imidazole glycerol phosphate synthase subunit HisF (Cereibacter sphaeroides (strain ATCC 17029 / ATH 2.4.9) (Rhodobacter sphaeroides)).